The following is a 356-amino-acid chain: Peptide chain release factor 1 (356 aa).

Glutamine 235 carries the N5-methylglutamine modification.

This sequence belongs to the prokaryotic/mitochondrial release factor family. Post-translationally, methylated by PrmC. Methylation increases the termination efficiency of RF1.

The protein localises to the cytoplasm. Functionally, peptide chain release factor 1 directs the termination of translation in response to the peptide chain termination codons UAG and UAA. In Hydrogenobaculum sp. (strain Y04AAS1), this protein is Peptide chain release factor 1.